Reading from the N-terminus, the 145-residue chain is Maximins 3/H3 type 2 (145 aa).

Residues 1–18 (MNFKYIVAVSFLIASAYA) form the signal peptide. Propeptides lie at residues 19–43 (RSVQ…LREI) and 74–124 (RTAE…KEKR). At Ile-144 the chain carries Isoleucine amide.

It belongs to the bombinin family. As to expression, expressed by the skin glands.

The protein resides in the secreted. Its function is as follows. Maximin-3 shows antibacterial activity against both Gram-positive and Gram-negative bacteria. It also shows antimicrobial activity against the fungus C.albicans, but not against A.flavus nor P.uticale. It has little hemolytic activity. It possess a significant cytotoxicity against tumor cell lines. It possess a significant anti-HIV activity. It shows high spermicidal activity. In terms of biological role, maximin-H3 shows antibacterial activity against both Gram-positive and Gram-negative bacteria. It also shows antimicrobial activity against the fungus C.albicans. Shows strong hemolytic activity. The sequence is that of Maximins 3/H3 type 2 from Bombina maxima (Giant fire-bellied toad).